Reading from the N-terminus, the 1201-residue chain is Period circadian protein homolog 3 (1201 aa).

The interval 1 to 50 (MPRGEAPGPGRRGAKDEALGEESGERWSPEFHLQRKLADSSHSEQQDRNR) is disordered. The segment covering 13-50 (GAKDEALGEESGERWSPEFHLQRKLADSSHSEQQDRNR) has biased composition (basic and acidic residues). A Nuclear export signal 1 motif is present at residues 55-64 (LIMVVQEMKK). 2 consecutive PAS domains span residues 121–188 (IASE…RAQL) and 262–328 (YEAP…KVLK). Positions 337-380 (HSPIRFCTQNGDYIILDSSWSSFVNPWSRKISFIIGRHKVRTSP) constitute a PAC domain. Residues 403-412 (LQEQIYKLLL) carry the Nuclear export signal 3 motif. The tract at residues 555-760 (LKRKCISCTN…SSSNTGSGPR (206 aa)) is CSNK1E binding domain. Disordered stretches follow at residues 717–788 (YSYF…FPPA) and 881–923 (PSMS…RSSS). The segment covering 721 to 731 (QGDSTSKQTRS) has biased composition (polar residues). A Nuclear localization signal motif is present at residues 729-745 (TRSAGCRKGKHKRKKLP). Basic residues predominate over residues 733 to 743 (GCRKGKHKRKK). Low complexity-rich tracts occupy residues 767–783 (AQPCCPSAASSPHTSSP) and 881–890 (PSMSSAMSPT). Residues 900–911 (QRREEEKWEAQS) show a composition bias toward basic and acidic residues. At serine 919 the chain carries Phosphoserine. The Nuclear export signal 2 signature appears at 925–932 (LQLNLLQE). The tract at residues 952–1067 (TEYCVTGNNG…GSAASGSSDS (116 aa)) is disordered. Composition is skewed to polar residues over residues 957–976 (TGNNGSESSPATTGALSTGS), 983–994 (SHPTASALSTGS), 1001–1012 (SHPTASALSTGS), and 1035–1050 (TPSHPTATVLSTGSPP). Tandem repeats lie at residues 965-982 (SPATTGALSTGSPPRENP), 983-1000 (SHPTASALSTGSPPMKNP), 1001-1018 (SHPTASALSTGSPPMKNP), 1019-1036 (SHPTASTLSMGLPPSRTP), and 1037-1054 (SHPTATVLSTGSPPSESP). Residues 965-1054 (SPATTGALST…STGSPPSESP (90 aa)) are 5 X 18 AA tandem repeats of S-[HP]-[AP]-T-[AT]-[GST]-[ATV]-L-S-[MT]-G-[LS]-P-P-[MRS]-[EKR]-[NST]-P. Serine 994 is subject to Phosphoserine. Serine 1053 bears the Phosphoserine mark. Residues 1053–1067 (SPSRTGSAASGSSDS) show a composition bias toward low complexity. The interval 1123-1201 (ERVKEVVLKE…CGQVLVEDSC (79 aa)) is CRY binding domain.

In terms of assembly, homodimer. Component of the circadian core oscillator, which includes the CRY proteins, CLOCK or NPAS2, BMAL1 or BMAL2, CSNK1D and/or CSNK1E, TIMELESS and the PER proteins. Interacts directly with PER1, PER2, CRY1, CRY2, and TIMELESS; interaction with CRY1 and CRY2 is weak and not rhythmic. Interacts with FBXW11 and BTRC. Post-translationally, phosphorylation by CSNK1E is weak and appears to require association with PER1 and translocation to the nucleus. Ubiquitinated.

It is found in the cytoplasm. Its subcellular location is the nucleus. In terms of biological role, originally described as a core component of the circadian clock. The circadian clock, an internal time-keeping system, regulates various physiological processes through the generation of approximately 24 hour circadian rhythms in gene expression, which are translated into rhythms in metabolism and behavior. It is derived from the Latin roots 'circa' (about) and 'diem' (day) and acts as an important regulator of a wide array of physiological functions including metabolism, sleep, body temperature, blood pressure, endocrine, immune, cardiovascular, and renal function. Consists of two major components: the central clock, residing in the suprachiasmatic nucleus (SCN) of the brain, and the peripheral clocks that are present in nearly every tissue and organ system. Both the central and peripheral clocks can be reset by environmental cues, also known as Zeitgebers (German for 'timegivers'). The predominant Zeitgeber for the central clock is light, which is sensed by retina and signals directly to the SCN. The central clock entrains the peripheral clocks through neuronal and hormonal signals, body temperature and feeding-related cues, aligning all clocks with the external light/dark cycle. Circadian rhythms allow an organism to achieve temporal homeostasis with its environment at the molecular level by regulating gene expression to create a peak of protein expression once every 24 hours to control when a particular physiological process is most active with respect to the solar day. Transcription and translation of core clock components (CLOCK, NPAS2, BMAL1, BMAL2, PER1, PER2, PER3, CRY1 and CRY2) plays a critical role in rhythm generation, whereas delays imposed by post-translational modifications (PTMs) are important for determining the period (tau) of the rhythms (tau refers to the period of a rhythm and is the length, in time, of one complete cycle). A diurnal rhythm is synchronized with the day/night cycle, while the ultradian and infradian rhythms have a period shorter and longer than 24 hours, respectively. Disruptions in the circadian rhythms contribute to the pathology of cardiovascular diseases, cancer, metabolic syndromes and aging. A transcription/translation feedback loop (TTFL) forms the core of the molecular circadian clock mechanism. Transcription factors, CLOCK or NPAS2 and BMAL1 or BMAL2, form the positive limb of the feedback loop, act in the form of a heterodimer and activate the transcription of core clock genes and clock-controlled genes (involved in key metabolic processes), harboring E-box elements (5'-CACGTG-3') within their promoters. The core clock genes: PER1/2/3 and CRY1/2 which are transcriptional repressors form the negative limb of the feedback loop and interact with the CLOCK|NPAS2-BMAL1|BMAL2 heterodimer inhibiting its activity and thereby negatively regulating their own expression. This heterodimer also activates nuclear receptors NR1D1, NR1D2, RORA, RORB and RORG, which form a second feedback loop and which activate and repress BMAL1 transcription, respectively. Has a redundant role with the other PER proteins PER1 and PER2 and is not essential for the circadian rhythms maintenance. In contrast, plays an important role in sleep-wake timing and sleep homeostasis probably through the transcriptional regulation of sleep homeostasis-related genes, without influencing circadian parameters. Can bind heme. The polypeptide is Period circadian protein homolog 3 (PER3) (Homo sapiens (Human)).